A 567-amino-acid polypeptide reads, in one-letter code: Urease subunit alpha (567 aa).

The Urease domain maps to 129–567 (GGIDSHIHFI…LPMAQRYFLF (439 aa)). Ni(2+)-binding residues include His134, His136, and Lys217. At Lys217 the chain carries N6-carboxylysine. Substrate is bound at residue His219. His246 and His272 together coordinate Ni(2+). Catalysis depends on His320, which acts as the Proton donor. Asp360 is a binding site for Ni(2+).

Belongs to the metallo-dependent hydrolases superfamily. Urease alpha subunit family. Heterotrimer of UreA (gamma), UreB (beta) and UreC (alpha) subunits. Three heterotrimers associate to form the active enzyme. Ni cation serves as cofactor. In terms of processing, carboxylation allows a single lysine to coordinate two nickel ions.

It is found in the cytoplasm. The enzyme catalyses urea + 2 H2O + H(+) = hydrogencarbonate + 2 NH4(+). Its pathway is nitrogen metabolism; urea degradation; CO(2) and NH(3) from urea (urease route): step 1/1. The polypeptide is Urease subunit alpha (Alcanivorax borkumensis (strain ATCC 700651 / DSM 11573 / NCIMB 13689 / SK2)).